The chain runs to 327 residues: Trypsin-like protease try-5 (327 aa).

Positions M1–L21 are cleaved as a signal peptide. The Peptidase S1 domain occupies A43 to A327. C73 and C89 form a disulfide bridge. Catalysis depends on charge relay system residues H88 and D173. N207 is a glycosylation site (N-linked (GlcNAc...) asparagine). Disulfide bonds link C242-C256 and C266-C296. Catalysis depends on S270, which acts as the Charge relay system.

It belongs to the peptidase S1 family. Specifically expressed in the male gonad including the seminal vesicle, the valve region and the vas deferens.

The protein resides in the secreted. It localises to the cytoplasmic vesicle. Its subcellular location is the secretory vesicle lumen. Its activity is regulated as follows. In the male gonad, probably maintained inactive by swm-1. Functionally, serine protease which, in males, acts as a promoting signal during mating to activate sperm. The protein is Trypsin-like protease try-5 of Caenorhabditis elegans.